Reading from the N-terminus, the 474-residue chain is Glutathione synthetase (474 aa).

Residue Arg-125 coordinates substrate. An ATP-binding site is contributed by Glu-144. Glu-144 and Asn-146 together coordinate Mg(2+). Residues 148-151, 214-216, Gln-220, and 267-270 contribute to the substrate site; these read IAAS, QRN, and RTGY. ATP-binding positions include Lys-305, 364-373, Tyr-375, 398-401, and Glu-425; these read KPQREGGGNN and MDKI. A Mg(2+)-binding site is contributed by Glu-368. Residue Arg-450 participates in substrate binding. Residues Lys-452 and Asp-458 each contribute to the ATP site. 461-462 is a binding site for substrate; sequence VA.

The protein belongs to the eukaryotic GSH synthase family. In terms of assembly, homodimer. Mg(2+) serves as cofactor. As to expression, expressed ubiquitously.

It catalyses the reaction gamma-L-glutamyl-L-cysteine + glycine + ATP = glutathione + ADP + phosphate + H(+). The catalysed reaction is gamma-L-glutamyl-(2S)-2-aminobutanoate + glycine + ATP = ophthalmate + ADP + phosphate + H(+). Its pathway is sulfur metabolism; glutathione biosynthesis; glutathione from L-cysteine and L-glutamate: step 2/2. Functionally, catalyzes the production of glutathione from gamma-glutamylcysteine and glycine in an ATP-dependent manner. Glutathione (gamma-glutamylcysteinylglycine, GSH) is the most abundant intracellular thiol in living aerobic cells and is required for numerous processes including the protection of cells against oxidative damage, amino acid transport, the detoxification of foreign compounds, the maintenance of protein sulfhydryl groups in a reduced state and acts as a cofactor for a number of enzymes. Participates in ophthalmate biosynthesis in hepatocytes. The polypeptide is Glutathione synthetase (Xenopus laevis (African clawed frog)).